Reading from the N-terminus, the 267-residue chain is MFVETQEEVPEIREPLRRVGITNLRTVAKINWKGREYTFLPLIEVTIDVPAEKKGIHMSRLVESITEAMSEAVEEEVAKVHSSLEELGKSVIERLEGKHPHKRAEVWIKTHLIIPRTTPASKKTSYEPYDVEVGVIKNEDGSFEKVLRVRVIGNTACPHAMANNNGKTHIQRAIGELEIRAPFEEEIPLEEMIDVVESSFSHPTYTLLKTVDENAVVQGMFANPKFVEDVAREIFAKAKERFRGRIHVRVISNESIHKHDVIAETWS.

The protein belongs to the GTP cyclohydrolase IV family. Homodimer. Fe(2+) serves as cofactor.

It catalyses the reaction GTP + H2O = 7,8-dihydroneopterin 2',3'-cyclic phosphate + formate + diphosphate + H(+). Its pathway is cofactor biosynthesis; 5,6,7,8-tetrahydromethanopterin biosynthesis. Converts GTP to 7,8-dihydro-D-neopterin 2',3'-cyclic phosphate, the first intermediate in the biosynthesis of coenzyme methanopterin. This chain is GTP cyclohydrolase MptA, found in Thermococcus kodakarensis (strain ATCC BAA-918 / JCM 12380 / KOD1) (Pyrococcus kodakaraensis (strain KOD1)).